We begin with the raw amino-acid sequence, 780 residues long: MENRFQNDTLFSEWFGQSLSDVRFPDNVTVYSQADSAVSFENVRQPIKLVRAAMGSGKTTALIHFLKQVPKELSVLLISCRKTFAAEILHRFTLNGLEDFELYCDITERQINNRKVIVQIESLHRLTENYDVLILDEIMSIIKQFYSKTMTKTKEVDCKFLSLIKNSSHVIAMDATLTRHVVEFFAAFKPDTQIALIRNTFVSAMFSNRVAYFCDTFFGKEFSFFARLEDKLRWDKKLCLFCSTVLAAEYMHDLIRSRFSLKKVLLLTSKQGKCSSIESWIRYDVVIYTSVVTVGLSFEPVYFSSLFVYIQLAKGGPDMVSIFQSIGRVRRVIDEDIYIYMNPVLIKSYDPLAPIAMPPCSDWSVAEQSIISESCIDFRGKCSGAHKYNFCSVLKCLFRYRHYIEKTTITSLSDSLFLLCSLLCENSIKVDIVGNGFPMRKEVFLSFLQILVEECHFIEKKITLPGDNMTFQEIISSRETIMNGDFYENGNQLLHKDYITDMGKFRATFLSPGVDIFIASDIVSDLKNESKRYVFVNVWLQKCVSAGVESTRIERVFNERIKSYVLPKSFLCDEYFVLGDISGVYEWGMLIDLAFLAEMIRKDLKLKSCTDTTTDISEDDLLLCAARRSSDILQIMQLVFTVHVQFFQRYSLQTLQLFNKLRGMRIVTGVFSIEKFSISILRLFFKCAFNMTLSASKPRYIPGKAYRNLTKNDLENMLDNWEISRTNLKTCKELRKALTEASRARRKQTIYKLQGSDISLSVSEVGVFGQHASPGVCVSS.

Residues 39–195 form the Helicase ATP-binding domain; that stretch reads SFENVRQPIK…AAFKPDTQIA (157 aa). 52–59 is a binding site for ATP; that stretch reads AAMGSGKT.

The protein belongs to the herpesviridae OriBP family.

In terms of biological role, probably involved in DNA replication. Binds the origin of replication (ori). The chain is Replication origin-binding protein (U73) from Homo sapiens (Human).